The primary structure comprises 506 residues: Histidine ammonia-lyase (506 aa).

Residues 143-145 constitute a cross-link (5-imidazolinone (Ala-Gly)); the sequence is ASG. Position 144 is a 2,3-didehydroalanine (Ser) (Ser144).

This sequence belongs to the PAL/histidase family. Contains an active site 4-methylidene-imidazol-5-one (MIO), which is formed autocatalytically by cyclization and dehydration of residues Ala-Ser-Gly.

The protein localises to the cytoplasm. The catalysed reaction is L-histidine = trans-urocanate + NH4(+). It participates in amino-acid degradation; L-histidine degradation into L-glutamate; N-formimidoyl-L-glutamate from L-histidine: step 1/3. In Salmonella arizonae (strain ATCC BAA-731 / CDC346-86 / RSK2980), this protein is Histidine ammonia-lyase.